The following is an 843-amino-acid chain: Beta-mannosidase B (843 aa).

Glu-432 (proton donor) is an active-site residue.

Belongs to the glycosyl hydrolase 2 family. Beta-mannosidase B subfamily.

The enzyme catalyses Hydrolysis of terminal, non-reducing beta-D-mannose residues in beta-D-mannosides.. The protein operates within glycan metabolism; N-glycan degradation. Its function is as follows. Exoglycosidase that cleaves the single beta-linked mannose residue from the non-reducing end of beta-mannosidic oligosaccharides of various complexity and length. Prefers mannobiose over mannotriose and has no activity against polymeric mannan. Is also severely restricted by galactosyl substitutions at the +1 subsite. Releases the terminal mannose residue from mannobiose, mannotriose and galactosyl-mannotriose (GM3), but not from galactosyl-mannobiose (GM2) or di-galactosyl-mannopentaose (G2M5). The sequence is that of Beta-mannosidase B (mndB) from Emericella nidulans (strain FGSC A4 / ATCC 38163 / CBS 112.46 / NRRL 194 / M139) (Aspergillus nidulans).